Here is a 267-residue protein sequence, read N- to C-terminus: GTP cyclohydrolase FolE2 2 (267 aa).

Belongs to the GTP cyclohydrolase IV family.

It catalyses the reaction GTP + H2O = 7,8-dihydroneopterin 3'-triphosphate + formate + H(+). It functions in the pathway cofactor biosynthesis; 7,8-dihydroneopterin triphosphate biosynthesis; 7,8-dihydroneopterin triphosphate from GTP: step 1/1. In terms of biological role, converts GTP to 7,8-dihydroneopterin triphosphate. The sequence is that of GTP cyclohydrolase FolE2 2 from Cupriavidus metallidurans (strain ATCC 43123 / DSM 2839 / NBRC 102507 / CH34) (Ralstonia metallidurans).